The chain runs to 272 residues: Cerberus (272 aa).

An N-terminal signal peptide occupies residues methionine 1–proline 19. Disulfide bonds link cysteine 168–cysteine 215, cysteine 182–cysteine 229, cysteine 192–cysteine 245, and cysteine 196–cysteine 247. The 86-residue stretch at cysteine 168–glutamate 253 folds into the CTCK domain. N-linked (GlcNAc...) asparagine glycosylation is present at asparagine 228.

This sequence belongs to the DAN family.

It localises to the secreted. Cytokine that acts as a regulator of the activity of Nodal/BMP pathways during the establishment of bilateral asymmetry in the head and trunk of the embryo. This Gallus gallus (Chicken) protein is Cerberus (CER1).